A 217-amino-acid polypeptide reads, in one-letter code: Probable GTP-binding protein EngB (217 aa).

The EngB-type G domain maps to 24-207; it reads SQPEICFAGR…HALIESWLIP (184 aa). GTP is bound by residues 32–39, 59–63, 81–84, 148–151, and 185–188; these read GRSNAGKS, GRTQH, DLPG, TKCD, and LFSA. Mg(2+) contacts are provided by Ser-39 and Thr-61.

The protein belongs to the TRAFAC class TrmE-Era-EngA-EngB-Septin-like GTPase superfamily. EngB GTPase family. The cofactor is Mg(2+).

Necessary for normal cell division and for the maintenance of normal septation. The sequence is that of Probable GTP-binding protein EngB from Paraburkholderia xenovorans (strain LB400).